The sequence spans 29 residues: Glucagon (29 aa).

Position 2 is a phosphoserine (serine 2).

Belongs to the glucagon family.

Its subcellular location is the secreted. Its function is as follows. Glucagon plays a key role in glucose metabolism and homeostasis. Regulates blood glucose by increasing gluconeogenesis and decreasing glycolysis. In Oryctolagus cuniculus (Rabbit), this protein is Glucagon (GCG).